Here is a 348-residue protein sequence, read N- to C-terminus: tRNA N6-adenosine threonylcarbamoyltransferase (348 aa).

Residues histidine 111 and histidine 115 each coordinate Fe cation. Substrate contacts are provided by residues leucine 134 to glycine 138, aspartate 167, glycine 180, and asparagine 276. Aspartate 304 serves as a coordination point for Fe cation.

Belongs to the KAE1 / TsaD family. The cofactor is Fe(2+).

The protein localises to the cytoplasm. It carries out the reaction L-threonylcarbamoyladenylate + adenosine(37) in tRNA = N(6)-L-threonylcarbamoyladenosine(37) in tRNA + AMP + H(+). Functionally, required for the formation of a threonylcarbamoyl group on adenosine at position 37 (t(6)A37) in tRNAs that read codons beginning with adenine. Is involved in the transfer of the threonylcarbamoyl moiety of threonylcarbamoyl-AMP (TC-AMP) to the N6 group of A37, together with TsaE and TsaB. TsaD likely plays a direct catalytic role in this reaction. In Bordetella petrii (strain ATCC BAA-461 / DSM 12804 / CCUG 43448), this protein is tRNA N6-adenosine threonylcarbamoyltransferase.